Reading from the N-terminus, the 544-residue chain is NADH-quinone oxidoreductase subunit C/D (544 aa).

The NADH dehydrogenase I subunit C stretch occupies residues 1 to 138; sequence MLNCDMLIDS…KGQICTETED (138 aa). Positions 161-544 are NADH dehydrogenase I subunit D; it reads MLLNVGPSHP…MNFIAGEFDR (384 aa).

This sequence in the N-terminal section; belongs to the complex I 30 kDa subunit family. The protein in the C-terminal section; belongs to the complex I 49 kDa subunit family. In terms of assembly, NDH-1 is composed of 13 different subunits. Subunits NuoB, CD, E, F, and G constitute the peripheral sector of the complex.

The protein resides in the cell inner membrane. It catalyses the reaction a quinone + NADH + 5 H(+)(in) = a quinol + NAD(+) + 4 H(+)(out). Functionally, NDH-1 shuttles electrons from NADH, via FMN and iron-sulfur (Fe-S) centers, to quinones in the respiratory chain. The immediate electron acceptor for the enzyme in this species is believed to be ubiquinone. Couples the redox reaction to proton translocation (for every two electrons transferred, four hydrogen ions are translocated across the cytoplasmic membrane), and thus conserves the redox energy in a proton gradient. The chain is NADH-quinone oxidoreductase subunit C/D from Aliarcobacter butzleri (strain RM4018) (Arcobacter butzleri).